The primary structure comprises 173 residues: Nicotinamide-nucleotide adenylyltransferase (173 aa).

This sequence belongs to the archaeal NMN adenylyltransferase family.

Its subcellular location is the cytoplasm. The catalysed reaction is beta-nicotinamide D-ribonucleotide + ATP + H(+) = diphosphate + NAD(+). It participates in cofactor biosynthesis; NAD(+) biosynthesis; NAD(+) from nicotinamide D-ribonucleotide: step 1/1. This Methanosarcina mazei (strain ATCC BAA-159 / DSM 3647 / Goe1 / Go1 / JCM 11833 / OCM 88) (Methanosarcina frisia) protein is Nicotinamide-nucleotide adenylyltransferase.